Consider the following 96-residue polypeptide: Aspartyl/glutamyl-tRNA(Asn/Gln) amidotransferase subunit C (96 aa).

The protein belongs to the GatC family. Heterotrimer of A, B and C subunits.

The catalysed reaction is L-glutamyl-tRNA(Gln) + L-glutamine + ATP + H2O = L-glutaminyl-tRNA(Gln) + L-glutamate + ADP + phosphate + H(+). It carries out the reaction L-aspartyl-tRNA(Asn) + L-glutamine + ATP + H2O = L-asparaginyl-tRNA(Asn) + L-glutamate + ADP + phosphate + 2 H(+). Functionally, allows the formation of correctly charged Asn-tRNA(Asn) or Gln-tRNA(Gln) through the transamidation of misacylated Asp-tRNA(Asn) or Glu-tRNA(Gln) in organisms which lack either or both of asparaginyl-tRNA or glutaminyl-tRNA synthetases. The reaction takes place in the presence of glutamine and ATP through an activated phospho-Asp-tRNA(Asn) or phospho-Glu-tRNA(Gln). This is Aspartyl/glutamyl-tRNA(Asn/Gln) amidotransferase subunit C from Exiguobacterium sp. (strain ATCC BAA-1283 / AT1b).